A 458-amino-acid chain; its full sequence is UDP-N-acetylmuramoylalanine--D-glutamate ligase (458 aa).

Residue 124–130 coordinates ATP; that stretch reads GSDGKTT.

It belongs to the MurCDEF family.

It localises to the cytoplasm. The catalysed reaction is UDP-N-acetyl-alpha-D-muramoyl-L-alanine + D-glutamate + ATP = UDP-N-acetyl-alpha-D-muramoyl-L-alanyl-D-glutamate + ADP + phosphate + H(+). It functions in the pathway cell wall biogenesis; peptidoglycan biosynthesis. In terms of biological role, cell wall formation. Catalyzes the addition of glutamate to the nucleotide precursor UDP-N-acetylmuramoyl-L-alanine (UMA). This Clostridium botulinum (strain Okra / Type B1) protein is UDP-N-acetylmuramoylalanine--D-glutamate ligase.